The chain runs to 559 residues: N-acetylglucosamine-6-sulfatase (559 aa).

The interval Met-1 to Pro-26 is disordered. Positions Met-1 to Ala-47 are cleaved as a signal peptide. Ca(2+) contacts are provided by Asp-62, Asp-63, and Cys-98. The active-site Nucleophile is the Cys-98. Cys-98 is subject to 3-oxoalanine (Cys). N-linked (GlcNAc...) asparagine glycans are attached at residues Asn-118, Asn-124, Asn-190, Asn-205, Asn-217, Asn-286, and Asn-324. Residues Asp-333 and Asn-334 each contribute to the Ca(2+) site. N-linked (GlcNAc...) asparagine glycans are attached at residues Asn-369, Asn-394, Asn-412, Asn-429, Asn-456, and Asn-487. At Ser-548 the chain carries Phosphoserine.

It belongs to the sulfatase family. It depends on Ca(2+) as a cofactor. In terms of processing, processed by internal peptidase. The conversion to 3-oxoalanine (also known as C-formylglycine, FGly), of a serine or cysteine residue in prokaryotes and of a cysteine residue in eukaryotes, is critical for catalytic activity.

The protein resides in the lysosome. It carries out the reaction Hydrolysis of the 6-sulfate groups of the N-acetyl-D-glucosamine 6-sulfate units of heparan sulfate and keratan sulfate.. Hydrolyzes 6-sulfate groups in N-acetyl-d-glucosaminide units of heparin sulfate and keratan sulfate. This chain is N-acetylglucosamine-6-sulfatase (GNS), found in Capra hircus (Goat).